A 217-amino-acid chain; its full sequence is Large ribosomal subunit protein eL14 (217 aa).

An N6-acetyllysine modification is found at K79. K85 is modified (N6-acetyllysine; alternate). An N6-succinyllysine; alternate modification is found at K85. Residue K124 forms a Glycyl lysine isopeptide (Lys-Gly) (interchain with G-Cter in SUMO2) linkage. S139 carries the phosphoserine modification. Residues 162-217 (KVPAKKATGPGKKAAGQKAPAQKAAGQKAAPPAKGQKGQKTPAQKAPAPKAAGKKA) form a disordered region. One copy of the 1-1; approximate repeat lies at 173–177 (KKAAG). The tract at residues 173–192 (KKAAGQKAPAQKAAGQKAAP) is 4 X 5 AA tandem repeats of Q-K-A-[APS]-X. 5 tandem repeats follow at residues 178-182 (QKAPA), 183-187 (QKAAG), 188-192 (QKAAP), 195-197 (KGQ), and 198-200 (KGQ). The tract at residues 195 to 200 (KGQKGQ) is 2 X 3 AA tandem repeats of K-G-Q. Residue K206 is modified to N6-succinyllysine.

This sequence belongs to the eukaryotic ribosomal protein eL14 family. Component of the large ribosomal subunit.

It is found in the cytoplasm. Its function is as follows. Component of the large ribosomal subunit. The ribosome is a large ribonucleoprotein complex responsible for the synthesis of proteins in the cell. The polypeptide is Large ribosomal subunit protein eL14 (Rpl14) (Mus musculus (Mouse)).